The primary structure comprises 208 residues: Protein DEHYDRATION-INDUCED 19 homolog 6 (208 aa).

Positions 151-190 (VDSPRRSEADAEGHGSSSSDDQKRREQGVMDDASKEELEE) are disordered. Basic and acidic residues-rich tracts occupy residues 153-163 (SPRRSEADAEG) and 170-190 (DDQK…ELEE).

Belongs to the Di19 family.

This is Protein DEHYDRATION-INDUCED 19 homolog 6 (DI19-6) from Oryza sativa subsp. japonica (Rice).